Here is a 483-residue protein sequence, read N- to C-terminus: Cysteine--tRNA ligase (483 aa).

Cys29 serves as a coordination point for Zn(2+). The 'HIGH' region signature appears at 31-41 (ITVYDYCHLGH). Zn(2+) is bound by residues Cys215, His240, and Glu244. A 'KMSKS' region motif is present at residues 272–276 (KMSKS). Residue Lys275 participates in ATP binding.

It belongs to the class-I aminoacyl-tRNA synthetase family. As to quaternary structure, monomer. It depends on Zn(2+) as a cofactor.

The protein localises to the cytoplasm. The enzyme catalyses tRNA(Cys) + L-cysteine + ATP = L-cysteinyl-tRNA(Cys) + AMP + diphosphate. The chain is Cysteine--tRNA ligase (cysS) from Synechocystis sp. (strain ATCC 27184 / PCC 6803 / Kazusa).